The sequence spans 190 residues: NADH-ubiquinone oxidoreductase 75 kDa subunit, mitochondrial (190 aa).

This sequence belongs to the complex I 75 kDa subunit family. Core subunit of respiratory chain NADH dehydrogenase (Complex I) which is composed of 45 different subunits. This is the largest subunit of complex I and it is a component of the iron-sulfur (IP) fragment of the enzyme. Complex I associates with ubiquinol-cytochrome reductase complex (Complex III) to form supercomplexes. Interacts with MDM2 and AKAP1. Requires [2Fe-2S] cluster as cofactor. [4Fe-4S] cluster is required as a cofactor.

It localises to the mitochondrion inner membrane. The catalysed reaction is a ubiquinone + NADH + 5 H(+)(in) = a ubiquinol + NAD(+) + 4 H(+)(out). Functionally, core subunit of the mitochondrial membrane respiratory chain NADH dehydrogenase (Complex I) which catalyzes electron transfer from NADH through the respiratory chain, using ubiquinone as an electron acceptor. Essential for catalysing the entry and efficient transfer of electrons within complex I. Plays a key role in the assembly and stability of complex I and participates in the association of complex I with ubiquinol-cytochrome reductase complex (Complex III) to form supercomplexes. The polypeptide is NADH-ubiquinone oxidoreductase 75 kDa subunit, mitochondrial (Mesocricetus auratus (Golden hamster)).